The chain runs to 134 residues: Holo-[acyl-carrier-protein] synthase (134 aa).

Residues D8 and E57 each coordinate Mg(2+).

This sequence belongs to the P-Pant transferase superfamily. AcpS family. Mg(2+) serves as cofactor.

It localises to the cytoplasm. The catalysed reaction is apo-[ACP] + CoA = holo-[ACP] + adenosine 3',5'-bisphosphate + H(+). In terms of biological role, transfers the 4'-phosphopantetheine moiety from coenzyme A to a Ser of acyl-carrier-protein. The polypeptide is Holo-[acyl-carrier-protein] synthase (Agrobacterium fabrum (strain C58 / ATCC 33970) (Agrobacterium tumefaciens (strain C58))).